A 419-amino-acid chain; its full sequence is ATP-dependent RNA helicase RhlB (419 aa).

Positions 9 to 37 (QRFSDLALHRSVQQAIKEKGFEFCTPIQA) match the Q motif motif. A Helicase ATP-binding domain is found at 40-217 (LPITLKGQDI…FEHMNDPQYV (178 aa)). 53–60 (AQTGTGKT) serves as a coordination point for ATP. The DEAD box signature appears at 163–166 (DEAD). A Helicase C-terminal domain is found at 241 to 388 (KMALLMTLLE…VSQYDAKALI (148 aa)).

Belongs to the DEAD box helicase family. RhlB subfamily. Component of the RNA degradosome, which is a multiprotein complex involved in RNA processing and mRNA degradation.

Its subcellular location is the cytoplasm. The enzyme catalyses ATP + H2O = ADP + phosphate + H(+). Functionally, DEAD-box RNA helicase involved in RNA degradation. Has RNA-dependent ATPase activity and unwinds double-stranded RNA. In Histophilus somni (strain 129Pt) (Haemophilus somnus), this protein is ATP-dependent RNA helicase RhlB.